The following is a 410-amino-acid chain: Imidazolonepropionase (410 aa).

Residues H71 and H73 each coordinate Fe(3+). H71 and H73 together coordinate Zn(2+). 4-imidazolone-5-propanoate contacts are provided by R80, Y143, and H175. Y143 is an N-formimidoyl-L-glutamate binding site. Residue H235 participates in Fe(3+) binding. Position 235 (H235) interacts with Zn(2+). E238 contributes to the 4-imidazolone-5-propanoate binding site. D309 is a Fe(3+) binding site. D309 provides a ligand contact to Zn(2+).

This sequence belongs to the metallo-dependent hydrolases superfamily. HutI family. The cofactor is Zn(2+). It depends on Fe(3+) as a cofactor.

It is found in the cytoplasm. The catalysed reaction is 4-imidazolone-5-propanoate + H2O = N-formimidoyl-L-glutamate. The protein operates within amino-acid degradation; L-histidine degradation into L-glutamate; N-formimidoyl-L-glutamate from L-histidine: step 3/3. In terms of biological role, catalyzes the hydrolytic cleavage of the carbon-nitrogen bond in imidazolone-5-propanoate to yield N-formimidoyl-L-glutamate. It is the third step in the universal histidine degradation pathway. In Thermoplasma acidophilum (strain ATCC 25905 / DSM 1728 / JCM 9062 / NBRC 15155 / AMRC-C165), this protein is Imidazolonepropionase.